Here is a 224-residue protein sequence, read N- to C-terminus: N-terminal Xaa-Pro-Lys N-methyltransferase 1 (224 aa).

S-adenosyl-L-methionine contacts are provided by residues glycine 70, arginine 75, 92 to 94 (DVT), 120 to 121 (LQ), and glutamine 136.

This sequence belongs to the methyltransferase superfamily. NTM1 family.

The protein localises to the nucleus. The enzyme catalyses N-terminal L-alanyl-L-prolyl-L-lysyl-[protein] + 3 S-adenosyl-L-methionine = N-terminal N,N,N-trimethyl-L-alanyl-L-prolyl-L-lysyl-[protein] + 3 S-adenosyl-L-homocysteine + 3 H(+). The catalysed reaction is N-terminal L-seryl-L-prolyl-L-lysyl-[protein] + 3 S-adenosyl-L-methionine = N-terminal N,N,N-trimethyl-L-seryl-L-prolyl-L-lysyl-[protein] + 3 S-adenosyl-L-homocysteine + 3 H(+). It carries out the reaction N-terminal L-prolyl-L-prolyl-L-lysyl-[protein] + 2 S-adenosyl-L-methionine = N-terminal N,N-dimethyl-L-prolyl-L-prolyl-L-lysyl-[protein] + 2 S-adenosyl-L-homocysteine + 2 H(+). Functionally, distributive alpha-N-methyltransferase that methylates the N-terminus of target proteins containing the N-terminal motif [Ala/Gly/Pro/Ser]-Pro-Lys when the initiator Met is cleaved. Specifically catalyzes mono-, di- or tri-methylation of the exposed alpha-amino group of the Ala, Gly or Ser residue in the [Ala/Gly/Ser]-Pro-Lys motif and mono- or di-methylation of Pro in the Pro-Pro-Lys motif. Required during mitosis for normal bipolar spindle formation and chromosome segregation via its action on target proteins. The protein is N-terminal Xaa-Pro-Lys N-methyltransferase 1 (ntmt1) of Xenopus tropicalis (Western clawed frog).